Reading from the N-terminus, the 333-residue chain is L-lactate dehydrogenase B chain (333 aa).

Residues 29–57 (GQVG…LEDK) and Arg-99 each bind NAD(+). 3 residues coordinate substrate: Arg-106, Asn-138, and Arg-169. Position 138 (Asn-138) interacts with NAD(+). His-193 serves as the catalytic Proton acceptor. Thr-248 contributes to the substrate binding site.

It belongs to the LDH/MDH superfamily. LDH family. As to quaternary structure, homotetramer.

Its subcellular location is the cytoplasm. It carries out the reaction (S)-lactate + NAD(+) = pyruvate + NADH + H(+). Its pathway is fermentation; pyruvate fermentation to lactate; (S)-lactate from pyruvate: step 1/1. Functionally, interconverts simultaneously and stereospecifically pyruvate and lactate with concomitant interconversion of NADH and NAD(+). The sequence is that of L-lactate dehydrogenase B chain (LDHB) from Sceloporus woodi (Florida scrub lizard).